Here is a 290-residue protein sequence, read N- to C-terminus: MAAGKEIRGKIKSVENTKKITKAMEMVAASKMRKAQERMLAARPYSEKIRNIAVHLGQANPEYVHPFMQVNGDAKTAGVIVVTTDKGLCGGMNTNVLRAVTAKLRELQDQGVSAEAVAIGNKGLGFLNRVGAKVVSHATGLGDTPHLEKLIGPVKVLLDAYAAGKLSAVYLSYTKFINTMKQESVVEQLLPLSSESMQAEKTSGHSWDYIYEPDAQSVIDELLVRYAESLVYQAVAENMASEQSARMVAMKAATDNAGNVISELKLVYNKTRQAAITTELSEIVAGAAAV.

The protein belongs to the ATPase gamma chain family. In terms of assembly, F-type ATPases have 2 components, CF(1) - the catalytic core - and CF(0) - the membrane proton channel. CF(1) has five subunits: alpha(3), beta(3), gamma(1), delta(1), epsilon(1). CF(0) has three main subunits: a, b and c.

The protein localises to the cell inner membrane. Produces ATP from ADP in the presence of a proton gradient across the membrane. The gamma chain is believed to be important in regulating ATPase activity and the flow of protons through the CF(0) complex. The chain is ATP synthase gamma chain from Delftia acidovorans (strain DSM 14801 / SPH-1).